Here is a 316-residue protein sequence, read N- to C-terminus: UDP-3-O-acylglucosamine N-acyltransferase 2 (316 aa).

The active-site Proton acceptor is His-230.

The protein belongs to the transferase hexapeptide repeat family. LpxD subfamily. As to quaternary structure, homotrimer.

It catalyses the reaction a UDP-3-O-[(3R)-3-hydroxyacyl]-alpha-D-glucosamine + a (3R)-hydroxyacyl-[ACP] = a UDP-2-N,3-O-bis[(3R)-3-hydroxyacyl]-alpha-D-glucosamine + holo-[ACP] + H(+). It functions in the pathway bacterial outer membrane biogenesis; LPS lipid A biosynthesis. Catalyzes the N-acylation of UDP-3-O-acylglucosamine using 3-hydroxyacyl-ACP as the acyl donor. Is involved in the biosynthesis of lipid A, a phosphorylated glycolipid that anchors the lipopolysaccharide to the outer membrane of the cell. The polypeptide is UDP-3-O-acylglucosamine N-acyltransferase 2 (Sulfurimonas denitrificans (strain ATCC 33889 / DSM 1251) (Thiomicrospira denitrificans (strain ATCC 33889 / DSM 1251))).